The primary structure comprises 148 residues: Urease accessory protein UreE (148 aa).

Belongs to the UreE family.

It localises to the cytoplasm. In terms of biological role, involved in urease metallocenter assembly. Binds nickel. Probably functions as a nickel donor during metallocenter assembly. The sequence is that of Urease accessory protein UreE from Bacillus sp. (strain TB-90).